The following is a 354-amino-acid chain: MNGTEGENFYVPMSNKTGVVRSPFDYPQYYLGEPWMFSALAAYMFFLILTGLPVNFLTLFVTIQHKKLRQPLNYILLNLAVSDLFMVFGGFTTTIITSMNGYFIFGPAGCNFEGFFATLGGEVGLWCLVVLAIERYMVVCKPMANFRFGSQHAIIGVVFTWIMALSCAGPPLVGWSRYIPEGLQCSCGVDYYTMKPEVNNESFVIYMFVVHFTIPLIVIFFCYGRLVCTVKEAAAQQQESESTQRAEREVTRMVIIMVVAFLICWVPYASVAFYIFINQGCDFTPFFMTVPAFFAKSSAVYNPLIYILMNKQFRNCMITTICLGKNPFEEEESTSASASKTEASSVSSSQVAPA.

At Met1–Met36 the chain is on the extracellular side. 2 N-linked (GlcNAc...) asparagine glycosylation sites follow: Asn2 and Asn15. The chain crosses the membrane as a helical span at residues Phe37 to Val61. The Cytoplasmic portion of the chain corresponds to Thr62–Asn73. A helical transmembrane segment spans residues Tyr74–Ile96. The Extracellular portion of the chain corresponds to Thr97–Cys110. Cys110 and Cys187 are joined by a disulfide. Residues Asn111–Ile133 traverse the membrane as a helical segment. A 'Ionic lock' involved in activated form stabilization motif is present at residues Glu134–Tyr136. Residues Glu134 to His152 are Cytoplasmic-facing. A helical transmembrane segment spans residues Ala153–Val173. Topologically, residues Gly174–Ser202 are extracellular. Residues Phe203–Gly224 traverse the membrane as a helical segment. The Cytoplasmic portion of the chain corresponds to Arg225–Arg252. Residues Met253 to Tyr274 traverse the membrane as a helical segment. Residues Ile275 to Phe286 lie on the Extracellular side of the membrane. A helical transmembrane segment spans residues Phe287–Leu308. An N6-(retinylidene)lysine modification is found at Lys296. Residues Met309 to Ala354 lie on the Cytoplasmic side of the membrane. A lipid anchor (S-palmitoyl cysteine) is attached at Cys322. Residues Ser333 to Ala354 are disordered. Low complexity predominate over residues Thr334–Ala354.

It belongs to the G-protein coupled receptor 1 family. Opsin subfamily. In terms of processing, phosphorylated on some or all of the serine and threonine residues present in the C-terminal region. Contains one covalently linked retinal chromophore.

The protein localises to the membrane. It is found in the cell projection. The protein resides in the cilium. Its subcellular location is the photoreceptor outer segment. Functionally, photoreceptor required for image-forming vision at low light intensity. While most salt water fish species use retinal as chromophore, most freshwater fish use 3-dehydroretinal, or a mixture of retinal and 3-dehydroretinal. Light-induced isomerization of 11-cis to all-trans retinal triggers a conformational change that activates signaling via G-proteins. Subsequent receptor phosphorylation mediates displacement of the bound G-protein alpha subunit by arrestin and terminates signaling. This is Rhodopsin (rho) from Leucoraja erinaceus (Little skate).